The primary structure comprises 403 residues: Alpha-1-antiproteinase F (403 aa).

Positions 1-22 (SAIPRGLLLLAGLCCLVFGIMA) are cleaved as a signal peptide. 5 N-linked (GlcNAc...) asparagine glycosylation sites follow: Asn55, Asn92, Asn155, Asn222, and Asn256. Positions 358–377 (GATELEITPHSVPQDLFFNK) are RCL.

This sequence belongs to the serpin family.

It localises to the secreted. Its function is as follows. Inhibits elastase, chymotrypsin, cathepsin G, plasmin, and trypsin. This chain is Alpha-1-antiproteinase F, found in Cavia porcellus (Guinea pig).